The primary structure comprises 217 residues: Proteasome subunit beta (217 aa).

A propeptide spans 1–14 (removed in mature form; by autocatalysis); it reads MIANNDQYKEYMKG. Threonine 15 serves as the catalytic Nucleophile.

The protein belongs to the peptidase T1B family. The 20S proteasome core is composed of 14 alpha and 14 beta subunits that assemble into four stacked heptameric rings, resulting in a barrel-shaped structure. The two inner rings, each composed of seven catalytic beta subunits, are sandwiched by two outer rings, each composed of seven alpha subunits. The catalytic chamber with the active sites is on the inside of the barrel. Has a gated structure, the ends of the cylinder being occluded by the N-termini of the alpha-subunits. Is capped at one or both ends by the proteasome regulatory ATPase, PAN.

The protein resides in the cytoplasm. It catalyses the reaction Cleavage of peptide bonds with very broad specificity.. Its activity is regulated as follows. The formation of the proteasomal ATPase PAN-20S proteasome complex, via the docking of the C-termini of PAN into the intersubunit pockets in the alpha-rings, triggers opening of the gate for substrate entry. Interconversion between the open-gate and close-gate conformations leads to a dynamic regulation of the 20S proteasome proteolysis activity. In terms of biological role, component of the proteasome core, a large protease complex with broad specificity involved in protein degradation. The polypeptide is Proteasome subunit beta (Methanococcus aeolicus (strain ATCC BAA-1280 / DSM 17508 / OCM 812 / Nankai-3)).